The chain runs to 451 residues: Lipase member H (451 aa).

A signal peptide spans 1-16 (MLRLCFFISFMCLVKS). Asn66 carries an N-linked (GlcNAc...) asparagine glycan. Residue Ser154 is the Nucleophile of the active site. Asp178 functions as the Charge relay system in the catalytic mechanism. An intrachain disulfide couples Cys233 to Cys246. The active-site Charge relay system is His248. Cystine bridges form between Cys270/Cys281, Cys284/Cys292, and Cys427/Cys446.

The protein belongs to the AB hydrolase superfamily. Lipase family. In terms of assembly, interacts with TTMP/C3orf52. Expressed in placenta and colon. Weakly expressed in small intestine.

Its subcellular location is the secreted. It is found in the cell membrane. The enzyme catalyses 1-hexadecanoyl-2-(9Z-octadecenoyl)-sn-glycero-3-phosphate + H2O = 2-(9Z-octadecenoyl)-sn-glycero-3-phosphate + hexadecanoate + H(+). Functionally, hydrolyzes specifically phosphatidic acid (PA) to produce 2-acyl lysophosphatidic acid (LPA; a potent bioactive lipid mediator) and fatty acid. Does not hydrolyze other phospholipids, like phosphatidylserine (PS), phosphatidylcholine (PC) and phosphatidylethanolamine (PE) or triacylglycerol (TG). The protein is Lipase member H (Liph) of Mus musculus (Mouse).